The chain runs to 261 residues: MTDSAAPRLHVQALSAGCAEAARRWAERLGLPLAADDEAEFAVQVGEQGLQVLQLGADSPGPVRVDFVEGASAHRRKFGGGSGQMIAKAVGVQPGIRPRVLDATAGLGRDGFVLASLGCEVTLVERQPLIAALLEDGLERARRDPDVAPIAARMRLLGGNSADLMRAWDGEAPQVVYLDPMFPHRDKSALVKKEMRLFRPLVGDDLDAPALLQAALALASHRVVVKRPRKAPIIEGPKPGYSLEGKSSRYDIYPKKALGKG.

Residues 109-110, 125-126, and aspartate 179 contribute to the S-adenosyl-L-methionine site; these read RD and ER.

This sequence belongs to the methyltransferase superfamily. RsmJ family.

The protein localises to the cytoplasm. It catalyses the reaction guanosine(1516) in 16S rRNA + S-adenosyl-L-methionine = N(2)-methylguanosine(1516) in 16S rRNA + S-adenosyl-L-homocysteine + H(+). In terms of biological role, specifically methylates the guanosine in position 1516 of 16S rRNA. This chain is Ribosomal RNA small subunit methyltransferase J, found in Pseudomonas aeruginosa (strain LESB58).